A 217-amino-acid polypeptide reads, in one-letter code: 5'-methylthioadenosine/S-adenosylhomocysteine nucleosidase (217 aa).

The active-site Proton acceptor is E11. Residues G77, V139, and M159–D160 each bind substrate. D183 functions as the Proton donor in the catalytic mechanism.

Belongs to the PNP/UDP phosphorylase family. MtnN subfamily.

It catalyses the reaction S-adenosyl-L-homocysteine + H2O = S-(5-deoxy-D-ribos-5-yl)-L-homocysteine + adenine. The enzyme catalyses S-methyl-5'-thioadenosine + H2O = 5-(methylsulfanyl)-D-ribose + adenine. The catalysed reaction is 5'-deoxyadenosine + H2O = 5-deoxy-D-ribose + adenine. It functions in the pathway amino-acid biosynthesis; L-methionine biosynthesis via salvage pathway; S-methyl-5-thio-alpha-D-ribose 1-phosphate from S-methyl-5'-thioadenosine (hydrolase route): step 1/2. Its function is as follows. Catalyzes the irreversible cleavage of the glycosidic bond in both 5'-methylthioadenosine (MTA) and S-adenosylhomocysteine (SAH/AdoHcy) to adenine and the corresponding thioribose, 5'-methylthioribose and S-ribosylhomocysteine, respectively. Also cleaves 5'-deoxyadenosine, a toxic by-product of radical S-adenosylmethionine (SAM) enzymes, into 5-deoxyribose and adenine. The polypeptide is 5'-methylthioadenosine/S-adenosylhomocysteine nucleosidase (mtnN) (Thermotoga maritima (strain ATCC 43589 / DSM 3109 / JCM 10099 / NBRC 100826 / MSB8)).